The chain runs to 620 residues: 1-deoxy-D-xylulose-5-phosphate synthase (620 aa).

Thiamine diphosphate is bound by residues H80 and 121 to 123 (GHS). Residue D152 coordinates Mg(2+). Residues 153-154 (GA), N181, Y288, and E370 contribute to the thiamine diphosphate site. N181 lines the Mg(2+) pocket.

The protein belongs to the transketolase family. DXPS subfamily. Homodimer. Mg(2+) serves as cofactor. It depends on thiamine diphosphate as a cofactor.

The catalysed reaction is D-glyceraldehyde 3-phosphate + pyruvate + H(+) = 1-deoxy-D-xylulose 5-phosphate + CO2. It participates in metabolic intermediate biosynthesis; 1-deoxy-D-xylulose 5-phosphate biosynthesis; 1-deoxy-D-xylulose 5-phosphate from D-glyceraldehyde 3-phosphate and pyruvate: step 1/1. Its function is as follows. Catalyzes the acyloin condensation reaction between C atoms 2 and 3 of pyruvate and glyceraldehyde 3-phosphate to yield 1-deoxy-D-xylulose-5-phosphate (DXP). The polypeptide is 1-deoxy-D-xylulose-5-phosphate synthase (Escherichia coli O127:H6 (strain E2348/69 / EPEC)).